The following is a 385-amino-acid chain: Sulfoquinovose monooxygenase (385 aa).

Residues 366-385 (AYGRVPSETPATPLGNGERH) form a disordered region.

The protein belongs to the SsuD family. In terms of assembly, homodimer.

The enzyme catalyses 6-sulfo-D-quinovose + FMNH2 + O2 = 6-dehydro-D-glucose + FMN + sulfite + H2O + 2 H(+). Its function is as follows. Part of the sulfoquinovose monooxygenase (sulfo-SMO) pathway, a D-sulfoquinovose degradation pathway that enables the complete utilization of all carbons within sulfoquinovose (SQ) with concomitant production of inorganic sulfite. Catalyzes the oxidative desulfurization of sulfoquinovose to sulfite and 6-dehydro-D-glucose. Is highly specific for sulfoquinovose and cannot use sulfoquinovosyl glycerol. FMNH(2) is provided by the FMN reductase SmoA. This Agrobacterium fabrum (strain C58 / ATCC 33970) (Agrobacterium tumefaciens (strain C58)) protein is Sulfoquinovose monooxygenase.